The primary structure comprises 440 residues: Xylose isomerase (440 aa).

Residues histidine 99 and aspartate 102 contribute to the active site. Mg(2+) is bound by residues glutamate 230, glutamate 266, histidine 269, aspartate 294, aspartate 305, aspartate 307, and aspartate 337.

This sequence belongs to the xylose isomerase family. In terms of assembly, homotetramer. Mg(2+) serves as cofactor.

The protein resides in the cytoplasm. The enzyme catalyses alpha-D-xylose = alpha-D-xylulofuranose. The polypeptide is Xylose isomerase (Halalkalibacterium halodurans (strain ATCC BAA-125 / DSM 18197 / FERM 7344 / JCM 9153 / C-125) (Bacillus halodurans)).